Reading from the N-terminus, the 240-residue chain is Large ribosomal subunit protein uL2 (240 aa).

Over residues 1-20 (MGKRLQSQNRGKGTPRYTSP) the composition is skewed to polar residues. 2 disordered regions span residues 1 to 33 (MGKR…YRKF) and 204 to 240 (PFGG…TGKR). 2 stretches are compositionally biased toward basic residues: residues 21 to 30 (THKRKGAVKY) and 224 to 240 (SPGR…TGKR).

It belongs to the universal ribosomal protein uL2 family. As to quaternary structure, part of the 50S ribosomal subunit. Forms a bridge to the 30S subunit in the 70S ribosome.

Its function is as follows. One of the primary rRNA binding proteins. Required for association of the 30S and 50S subunits to form the 70S ribosome, for tRNA binding and peptide bond formation. It has been suggested to have peptidyltransferase activity; this is somewhat controversial. Makes several contacts with the 16S rRNA in the 70S ribosome. The chain is Large ribosomal subunit protein uL2 from Methanococcus aeolicus (strain ATCC BAA-1280 / DSM 17508 / OCM 812 / Nankai-3).